Reading from the N-terminus, the 301-residue chain is tRNA dimethylallyltransferase (301 aa).

An ATP-binding site is contributed by 12-19 (GPTAVGKT). 14–19 (TAVGKT) is a substrate binding site. Positions 37–40 (DSQQ) are interaction with substrate tRNA.

Belongs to the IPP transferase family. In terms of assembly, monomer. Requires Mg(2+) as cofactor.

It carries out the reaction adenosine(37) in tRNA + dimethylallyl diphosphate = N(6)-dimethylallyladenosine(37) in tRNA + diphosphate. Catalyzes the transfer of a dimethylallyl group onto the adenine at position 37 in tRNAs that read codons beginning with uridine, leading to the formation of N6-(dimethylallyl)adenosine (i(6)A). The polypeptide is tRNA dimethylallyltransferase (Streptococcus uberis (strain ATCC BAA-854 / 0140J)).